Consider the following 56-residue polypeptide: Large ribosomal subunit protein eL40 (56 aa).

It belongs to the eukaryotic ribosomal protein eL40 family.

The chain is Large ribosomal subunit protein eL40 from Saccharolobus islandicus (strain Y.N.15.51 / Yellowstone #2) (Sulfolobus islandicus).